The following is a 249-amino-acid chain: RNA polymerase sigma factor SigI3 (249 aa).

Positions Glu-60–Ile-73 match the Polymerase core binding motif. Positions Met-199–Lys-218 form a DNA-binding region, H-T-H motif.

The protein belongs to the sigma-70 factor family. SigI subfamily. Interacts with RsgI3.

It is found in the cytoplasm. Negatively regulated by the anti-sigma-I factor RsgI3. Binding of the polysaccharide substrate to RsgI3 may lead to the release and activation of SigI3. Its function is as follows. Sigma factors are initiation factors that promote the attachment of RNA polymerase to specific initiation sites and are then released. This sigma factor is involved in regulation of cellulosomal genes via an external polysaccharide-sensing mechanism. Recognizes the predicted promoters associated with sigI3 itself, pl11, ce12 and cipA. This is RNA polymerase sigma factor SigI3 from Acetivibrio thermocellus (strain ATCC 27405 / DSM 1237 / JCM 9322 / NBRC 103400 / NCIMB 10682 / NRRL B-4536 / VPI 7372) (Clostridium thermocellum).